The primary structure comprises 302 residues: Acetylglutamate kinase (302 aa).

Substrate contacts are provided by residues 73-74, Arg95, and Asn200; that span reads GG.

It belongs to the acetylglutamate kinase family. ArgB subfamily.

The protein localises to the cytoplasm. It carries out the reaction N-acetyl-L-glutamate + ATP = N-acetyl-L-glutamyl 5-phosphate + ADP. Its pathway is amino-acid biosynthesis; L-arginine biosynthesis; N(2)-acetyl-L-ornithine from L-glutamate: step 2/4. Functionally, catalyzes the ATP-dependent phosphorylation of N-acetyl-L-glutamate. This Sphingopyxis alaskensis (strain DSM 13593 / LMG 18877 / RB2256) (Sphingomonas alaskensis) protein is Acetylglutamate kinase.